The primary structure comprises 448 residues: 4-hydroxybenzoate transporter PcaK (448 aa).

Topologically, residues 1–30 (MNQAQNSVGKSLDVQSFINQQPLSRYQWRV) are cytoplasmic. A helical transmembrane segment spans residues 31 to 51 (VLLCFLIVFLDGLDTAAMGFI). At 52-67 (APALSQEWGIDRASLG) the chain is on the periplasmic side. The helical transmembrane segment at 68 to 88 (PVMSAALIGMVFGALGSGPLA) threads the bilayer. Over 89–94 (DRFGRK) the chain is Cytoplasmic. A helical membrane pass occupies residues 95-115 (GVLVGAVLVFGGFSLASAYAT). Over 116–119 (NVDQ) the chain is Periplasmic. The chain crosses the membrane as a helical span at residues 120 to 140 (LLVLRFLTGLGLGAGMPNATT). The Cytoplasmic segment spans residues 141 to 152 (LLSEYTPERLKS). A helical transmembrane segment spans residues 153-173 (LLVTSMFCGFNLGMAGGGFIS). At 174 to 184 (AKMIPAYGWHS) the chain is on the periplasmic side. Residues 185 to 205 (LLVIGGVLPLLLALVLMVWLP) traverse the membrane as a helical segment. Topologically, residues 206–261 (ESARFLVVRNRGTDKIRKTLSPIAPQVVAEAGSFSVPEQKAVAARSVFAVIFSGTY) are cytoplasmic. The helical transmembrane segment at 262–282 (GLGTMLLWLTYFMGLVIVYLL) threads the bilayer. The Periplasmic segment spans residues 283–301 (TSWLPTLMRDSGASMEQAA). The chain crosses the membrane as a helical span at residues 302-322 (FIGALFQFGGVLSAVGVGWAM). Topologically, residues 323–329 (DRYNPHK) are cytoplasmic. The helical transmembrane segment at 330 to 350 (VIGIFYLLAGVFAYAVGQSLG) threads the bilayer. Position 351 (Asn-351) is a topological domain, periplasmic. A helical membrane pass occupies residues 352-372 (ITVLATLVLIAGMCVNGAQSA). Topologically, residues 373 to 398 (MPSLAARFYPTQGRATGVSWMLGIGR) are cytoplasmic. Residues 399-419 (FGAILGAWSGATLLGLGWNFE) form a helical membrane-spanning segment. The Periplasmic portion of the chain corresponds to 420-421 (QV). The helical transmembrane segment at 422–442 (LTALLVPAALATVGVIVKGLV) threads the bilayer. At 443-448 (SHADAT) the chain is on the cytoplasmic side.

The protein belongs to the major facilitator superfamily. Aromatic acid:H(+) symporter (AAHS) (TC 2.A.1.15) family.

It is found in the cell inner membrane. In terms of biological role, transports 4-hydroxybenzoate (4-HBA) and protocatechuate across the membrane. Driven by the proton motive force. Also functions as a chemoreceptor, which is required for chemotaxis to aromatic acids. The protein is 4-hydroxybenzoate transporter PcaK (pcaK) of Pseudomonas putida (Arthrobacter siderocapsulatus).